Here is a 419-residue protein sequence, read N- to C-terminus: Peroxisome biogenesis factor 10 (419 aa).

Over 1–27 (MPPSEEIKLRAVSPRPDFKANYLEFAN) the chain is Peroxisomal matrix. Residues 28 to 57 (APAIVRANQKDSYFETVLRDKLQNVIQIFK) form a helical membrane-spanning segment. A topological domain (cytoplasmic) is located at residue Gly58. Residues 59-80 (QRFTHTHPEEIGVAAKALYLSL) traverse the membrane as a helical segment. The Peroxisomal matrix portion of the chain corresponds to 81-108 (TTLLGTKTLGEEYVDLIYVSRDGKRIPR). A helical membrane pass occupies residues 109–141 (YLARAGFIFAYAILPYFLTRLFRRLKSSSTPKD). Residues 142–158 (EVTEEKINKELPISLRI) are Cytoplasmic-facing. The chain crosses the membrane as a helical span at residues 159-185 (EKYLSNMSYSKVLDTIMNLHIAVFYFS). Residues 186-215 (GQFYNISKRFFSMRYAFGHKINKERTPNGN) lie on the Peroxisomal matrix side of the membrane. The chain crosses the membrane as a helical span at residues 216–235 (YELLGGLIVLQLVMKSLGGF). The Cytoplasmic portion of the chain corresponds to 236–419 (KGLIGSFTGN…RTLGYFLVVF (184 aa)). Residues Cys298, Cys301, Cys313, His315, Cys318, Cys321, Cys334, and Cys347 each contribute to the Zn(2+) site. Residues 298–360 (CMLCLSYMTN…FYIPTLNKIC (63 aa)) form an RING-type zinc finger.

It belongs to the pex2/pex10/pex12 family. Component of the peroxisomal translocation complex, composed of at least PEX3, PEX2, PEX10 and PEX12. Interacts with PEX19.

The protein resides in the peroxisome membrane. It catalyses the reaction S-ubiquitinyl-[E2 ubiquitin-conjugating enzyme]-L-cysteine + [acceptor protein]-L-lysine = [E2 ubiquitin-conjugating enzyme]-L-cysteine + N(6)-ubiquitinyl-[acceptor protein]-L-lysine.. Its pathway is protein modification; protein ubiquitination. The E3 ubiquitin-protein ligase activity is stimulated by PEX12. E3 ubiquitin-protein ligase component of the peroxisomal translocation complex. The two types of peroxisomal matrix targeting signals, PTS1 and PTS2, are first recognized in the cytosol by their receptors PEX5 and PEX7, respectively, which then carry the cargo to the peroxisomal membrane. The peroxisomal targeting signal (PTS) receptor-cargo complexes interact with peroxisomal membrane protein (PMP) components of the docking complex. They have then additional downstream interactions with the translocation complex, leading to the transport of fully folded and oligomerized cargo into the peroxisome matrix. The peroxisomal translocation complex forms the retrotranslocation channel with each subunit contributing transmembrane segments that coassemble into an open channel that specifically allows the passage of PEX5 and PEX20 through the peroxisomal membrane. Specifically catalyzes monoubiquitination of PEX5 and/or PEX20 at 'Cys-6' and 'Cys-8', respectively, a modification that acts as a signal for PEX5 or PEX20 export from peroxisomes to the cytosol, thereby promoting PEX5 and PEX20 recycling. This Komagataella pastoris (Yeast) protein is Peroxisome biogenesis factor 10.